Consider the following 165-residue polypeptide: Large ribosomal subunit protein uL11 (165 aa).

Ser-38 carries the phosphoserine modification. Lys-40 is covalently cross-linked (Glycyl lysine isopeptide (Lys-Gly) (interchain with G-Cter in SUMO2)). A Glycyl lysine isopeptide (Lys-Gly) (interchain with G-Cter in ubiquitin) cross-link involves residue Lys-48. Position 54 is an N6-acetyllysine (Lys-54). Residue Lys-83 forms a Glycyl lysine isopeptide (Lys-Gly) (interchain with G-Cter in ubiquitin) linkage. Ser-165 is modified (phosphoserine).

This sequence belongs to the universal ribosomal protein uL11 family. In terms of assembly, component of the large ribosomal subunit. Mature ribosomes consist of a small (40S) and a large (60S) subunit. The 40S subunit contains about 33 different proteins and 1 molecule of RNA (18S). The 60S subunit contains about 49 different proteins and 3 molecules of RNA (28S, 5.8S and 5S). Post-translationally, ubiquitinated at Lys-48 and Lys-83 by RNF14 and RNF25 in response to ribosome collisions (ribosome stalling).

It localises to the cytoplasm. Component of the large ribosomal subunit. The ribosome is a large ribonucleoprotein complex responsible for the synthesis of proteins in the cell. Binds directly to 26S ribosomal RNA. The chain is Large ribosomal subunit protein uL11 (Rpl12) from Mus musculus (Mouse).